The following is a 216-amino-acid chain: Thymidine kinase (216 aa).

Residues 9–16 and 86–89 each bind ATP; these read GPMDSGKS and DEAQ. Residue E87 is the Proton acceptor of the active site.

This sequence belongs to the thymidine kinase family. In terms of assembly, homotetramer.

The protein resides in the cytoplasm. It carries out the reaction thymidine + ATP = dTMP + ADP + H(+). The sequence is that of Thymidine kinase from Cutibacterium acnes (strain DSM 16379 / KPA171202) (Propionibacterium acnes).